We begin with the raw amino-acid sequence, 504 residues long: ATP synthase subunit alpha, chloroplastic (504 aa).

170–177 (GDRQTGKT) is a binding site for ATP.

It belongs to the ATPase alpha/beta chains family. F-type ATPases have 2 components, CF(1) - the catalytic core - and CF(0) - the membrane proton channel. CF(1) has five subunits: alpha(3), beta(3), gamma(1), delta(1), epsilon(1). CF(0) has four main subunits: a, b, b' and c.

The protein localises to the plastid. It is found in the chloroplast thylakoid membrane. The catalysed reaction is ATP + H2O + 4 H(+)(in) = ADP + phosphate + 5 H(+)(out). In terms of biological role, produces ATP from ADP in the presence of a proton gradient across the membrane. The alpha chain is a regulatory subunit. This chain is ATP synthase subunit alpha, chloroplastic, found in Ostreococcus tauri.